The following is a 165-amino-acid chain: Phosphopantetheine adenylyltransferase (165 aa).

This sequence belongs to the eukaryotic CoaD family.

The protein localises to the cytoplasm. It carries out the reaction (R)-4'-phosphopantetheine + ATP + H(+) = 3'-dephospho-CoA + diphosphate. It functions in the pathway cofactor biosynthesis; coenzyme A biosynthesis. In terms of biological role, reversibly transfers an adenylyl group from ATP to 4'-phosphopantetheine, yielding dephospho-CoA (dPCoA) and pyrophosphate. The protein is Phosphopantetheine adenylyltransferase of Thermococcus kodakarensis (strain ATCC BAA-918 / JCM 12380 / KOD1) (Pyrococcus kodakaraensis (strain KOD1)).